The sequence spans 358 residues: 3-isopropylmalate dehydrogenase (358 aa).

Positions 92, 102, 130, and 224 each coordinate substrate. Residues Asp-224, Asp-248, and Asp-252 each contribute to the Mg(2+) site. NAD(+) is bound at residue 282–294; it reads GSAPDIAGQGIAN.

This sequence belongs to the isocitrate and isopropylmalate dehydrogenases family. LeuB type 1 subfamily. As to quaternary structure, homodimer. It depends on Mg(2+) as a cofactor. Requires Mn(2+) as cofactor.

The protein localises to the cytoplasm. It carries out the reaction (2R,3S)-3-isopropylmalate + NAD(+) = 4-methyl-2-oxopentanoate + CO2 + NADH. The protein operates within amino-acid biosynthesis; L-leucine biosynthesis; L-leucine from 3-methyl-2-oxobutanoate: step 3/4. Functionally, catalyzes the oxidation of 3-carboxy-2-hydroxy-4-methylpentanoate (3-isopropylmalate) to 3-carboxy-4-methyl-2-oxopentanoate. The product decarboxylates to 4-methyl-2 oxopentanoate. This Bordetella parapertussis (strain 12822 / ATCC BAA-587 / NCTC 13253) protein is 3-isopropylmalate dehydrogenase.